The following is a 335-amino-acid chain: tRNA N6-adenosine threonylcarbamoyltransferase (335 aa).

The Fe cation site is built by H110 and H114. Substrate is bound by residues 132 to 136, D165, G178, and N271; that span reads LVSGG. D299 contacts Fe cation.

This sequence belongs to the KAE1 / TsaD family. Fe(2+) is required as a cofactor.

It localises to the cytoplasm. The enzyme catalyses L-threonylcarbamoyladenylate + adenosine(37) in tRNA = N(6)-L-threonylcarbamoyladenosine(37) in tRNA + AMP + H(+). Its function is as follows. Required for the formation of a threonylcarbamoyl group on adenosine at position 37 (t(6)A37) in tRNAs that read codons beginning with adenine. Is involved in the transfer of the threonylcarbamoyl moiety of threonylcarbamoyl-AMP (TC-AMP) to the N6 group of A37, together with TsaE and TsaB. TsaD likely plays a direct catalytic role in this reaction. This chain is tRNA N6-adenosine threonylcarbamoyltransferase, found in Campylobacter jejuni subsp. jejuni serotype O:2 (strain ATCC 700819 / NCTC 11168).